The primary structure comprises 441 residues: Argininosuccinate lyase (441 aa).

Belongs to the lyase 1 family. Argininosuccinate lyase subfamily.

Its subcellular location is the cytoplasm. The enzyme catalyses 2-(N(omega)-L-arginino)succinate = fumarate + L-arginine. The protein operates within amino-acid biosynthesis; L-arginine biosynthesis; L-arginine from L-ornithine and carbamoyl phosphate: step 3/3. The protein is Argininosuccinate lyase of Thermoanaerobacter pseudethanolicus (strain ATCC 33223 / 39E) (Clostridium thermohydrosulfuricum).